Consider the following 598-residue polypeptide: Arginine--tRNA ligase (598 aa).

Positions 135 to 145 (ANPTGPIHIGG) match the 'HIGH' region motif. The interval 229-248 (VDGGTDEKGEPLGEGDSEQR) is disordered. Positions 231-248 (GGTDEKGEPLGEGDSEQR) are enriched in basic and acidic residues.

Belongs to the class-I aminoacyl-tRNA synthetase family. As to quaternary structure, monomer.

It localises to the cytoplasm. It catalyses the reaction tRNA(Arg) + L-arginine + ATP = L-arginyl-tRNA(Arg) + AMP + diphosphate. The sequence is that of Arginine--tRNA ligase from Bifidobacterium animalis subsp. lactis (strain AD011).